Consider the following 270-residue polypeptide: tRNA pseudouridine synthase A (270 aa).

Residue aspartate 60 is the Nucleophile of the active site. The tract at residues 107-111 (FHARF) is RNA binding. Residue tyrosine 118 coordinates substrate. Residues 168–172 (QCQSR) form an interaction with tRNA region.

This sequence belongs to the tRNA pseudouridine synthase TruA family. In terms of assembly, homodimer.

The enzyme catalyses uridine(38/39/40) in tRNA = pseudouridine(38/39/40) in tRNA. Its function is as follows. Formation of pseudouridine at positions 38, 39 and 40 in the anticodon stem and loop of transfer RNAs. In Escherichia coli (strain 55989 / EAEC), this protein is tRNA pseudouridine synthase A.